Consider the following 172-residue polypeptide: SsrA-binding protein (172 aa).

The protein belongs to the SmpB family.

It is found in the cytoplasm. Functionally, required for rescue of stalled ribosomes mediated by trans-translation. Binds to transfer-messenger RNA (tmRNA), required for stable association of tmRNA with ribosomes. tmRNA and SmpB together mimic tRNA shape, replacing the anticodon stem-loop with SmpB. tmRNA is encoded by the ssrA gene; the 2 termini fold to resemble tRNA(Ala) and it encodes a 'tag peptide', a short internal open reading frame. During trans-translation Ala-aminoacylated tmRNA acts like a tRNA, entering the A-site of stalled ribosomes, displacing the stalled mRNA. The ribosome then switches to translate the ORF on the tmRNA; the nascent peptide is terminated with the 'tag peptide' encoded by the tmRNA and targeted for degradation. The ribosome is freed to recommence translation, which seems to be the essential function of trans-translation. The protein is SsrA-binding protein of Dehalococcoides mccartyi (strain ATCC BAA-2100 / JCM 16839 / KCTC 5957 / BAV1).